A 556-amino-acid polypeptide reads, in one-letter code: 2-succinyl-5-enolpyruvyl-6-hydroxy-3-cyclohexene-1-carboxylate synthase (556 aa).

Belongs to the TPP enzyme family. MenD subfamily. Homodimer. The cofactor is Mg(2+). Requires Mn(2+) as cofactor. Thiamine diphosphate serves as cofactor.

The enzyme catalyses isochorismate + 2-oxoglutarate + H(+) = 5-enolpyruvoyl-6-hydroxy-2-succinyl-cyclohex-3-ene-1-carboxylate + CO2. Its pathway is quinol/quinone metabolism; 1,4-dihydroxy-2-naphthoate biosynthesis; 1,4-dihydroxy-2-naphthoate from chorismate: step 2/7. The protein operates within quinol/quinone metabolism; menaquinone biosynthesis. Its function is as follows. Catalyzes the thiamine diphosphate-dependent decarboxylation of 2-oxoglutarate and the subsequent addition of the resulting succinic semialdehyde-thiamine pyrophosphate anion to isochorismate to yield 2-succinyl-5-enolpyruvyl-6-hydroxy-3-cyclohexene-1-carboxylate (SEPHCHC). The chain is 2-succinyl-5-enolpyruvyl-6-hydroxy-3-cyclohexene-1-carboxylate synthase from Citrobacter koseri (strain ATCC BAA-895 / CDC 4225-83 / SGSC4696).